The chain runs to 158 residues: 6,7-dimethyl-8-ribityllumazine synthase 2 (158 aa).

Residues tryptophan 20, 54–56 (AYE), and 78–80 (FVI) contribute to the 5-amino-6-(D-ribitylamino)uracil site. Arginine 86 serves as the catalytic Proton donor. Residue serine 111 participates in 5-amino-6-(D-ribitylamino)uracil binding. Histidine 125 serves as a coordination point for (2S)-2-hydroxy-3-oxobutyl phosphate.

Belongs to the DMRL synthase family. Homodecamer, arranged as a dimer of pentamers.

The protein resides in the cytoplasm. The catalysed reaction is (2S)-2-hydroxy-3-oxobutyl phosphate + 5-amino-6-(D-ribitylamino)uracil = 6,7-dimethyl-8-(1-D-ribityl)lumazine + phosphate + 2 H2O + H(+). Its pathway is cofactor biosynthesis; riboflavin biosynthesis; riboflavin from 2-hydroxy-3-oxobutyl phosphate and 5-amino-6-(D-ribitylamino)uracil: step 1/2. In terms of biological role, catalyzes the formation of 6,7-dimethyl-8-ribityllumazine by condensation of 5-amino-6-(D-ribitylamino)uracil with 3,4-dihydroxy-2-butanone 4-phosphate. This is the penultimate step in the biosynthesis of riboflavin. The isozyme RibH2 but not RibH1 is essential for Brucella intracellular survival and replication inside macrophages or in mice. Displays low catalytic activity in comparison with the isozyme RibH1. Is a highly immunogenic protein. Activates dendritic cells (DCs) in vitro, increasing the levels of costimulatory molecules and the secretion of pro-inflammatory cytokines, and recruits DCs, B cells and CD8+ T cells in vivo, both effects in a TLR4-dependent manner. Induces the cross presentation of covalently attached peptides and generates a strong and long-lasting humoral immune response without adjuvants; TLR4 signaling is necessary for the induction of the cytotoxic response but not for antigen cross presentation. Elicits a TLR4-mediated protective response against B16 melanoma in mice, slowing tumor growth and prolonging mice survival. This is 6,7-dimethyl-8-ribityllumazine synthase 2 from Brucella abortus (strain 2308).